A 428-amino-acid chain; its full sequence is AP2-like ethylene-responsive transcription factor At2g41710 (428 aa).

Residues 1 to 10 are compositionally biased toward polar residues; sequence MASVSSSDQG. A disordered region spans residues 1 to 28; it reads MASVSSSDQGPKTEAGCSGGGGGESSET. A DNA-binding region (AP2/ERF) is located at residues 70–136; sequence IYRGVTRHRW…WGPGTLINFP (67 aa).

The protein belongs to the AP2/ERF transcription factor family. AP2 subfamily.

It is found in the nucleus. Probably acts as a transcriptional activator. Binds to the GCC-box pathogenesis-related promoter element. May be involved in the regulation of gene expression by stress factors and by components of stress signal transduction pathways. The sequence is that of AP2-like ethylene-responsive transcription factor At2g41710 from Arabidopsis thaliana (Mouse-ear cress).